The chain runs to 612 residues: Protein lin-61 (612 aa).

4 MBT repeats span residues 143–249, 263–380, 381–501, and 508–607; these read YLWE…MDKI, NDMV…GYQL, NAKK…LVPP, and FRWD…LQPP.

As to quaternary structure, interacts preferentially with histone H3 that is dimethylated or trimethylated at 'Lys-9'.

It localises to the nucleus. It is found in the chromosome. In terms of biological role, synthetic multivulva class B (synMuvB) protein required to repress the induction of vulval development by Ras signaling. Unlike other synMuv proteins it does not associate with the multiprotein DRM complex and the NuRD-like complex. Interaction with methylated histone H3 is essential for vulva development. It has a role in maintaining genome stability. This Caenorhabditis elegans protein is Protein lin-61 (lin-61).